The chain runs to 400 residues: DNA primase small subunit PriS (400 aa).

Residues D98, D100, and D306 contribute to the active site.

Belongs to the eukaryotic-type primase small subunit family. Heterodimer of a small subunit (PriS) and a large subunit (PriL). Mg(2+) serves as cofactor. Requires Mn(2+) as cofactor.

Catalytic subunit of DNA primase, an RNA polymerase that catalyzes the synthesis of short RNA molecules used as primers for DNA polymerase during DNA replication. The small subunit contains the primase catalytic core and has DNA synthesis activity on its own. Binding to the large subunit stabilizes and modulates the activity, increasing the rate of DNA synthesis while decreasing the length of the DNA fragments, and conferring RNA synthesis capability. The DNA polymerase activity may enable DNA primase to also catalyze primer extension after primer synthesis. May also play a role in DNA repair. This Methanocella arvoryzae (strain DSM 22066 / NBRC 105507 / MRE50) protein is DNA primase small subunit PriS.